A 234-amino-acid polypeptide reads, in one-letter code: Coiled-coil domain-containing protein 194 (234 aa).

Positions 1–43 are cleaved as a signal peptide; that stretch reads MAEPGPEPGRAWRLLALCGAAVFLAAAAAGGALVAWNLAASTA. The segment at 44 to 63 is disordered; it reads RSPRCPEPEQMNATVRPPDS. Residues 67 to 171 adopt a coiled-coil conformation; sequence VEELRRRLAE…LQRAGAAEAA (105 aa). Residues 194-234 are disordered; the sequence is GTLRKESRLRPRSGSRTKPSISHRPKSGSTKGCRRPPRDPQ. The span at 203-219 shows a compositional bias: basic residues; the sequence is RPRSGSRTKPSISHRPK.

This is Coiled-coil domain-containing protein 194 from Mus musculus (Mouse).